A 109-amino-acid chain; its full sequence is Lipoprotein BsmA (109 aa).

Residues 1–24 (MVSRKRNSVIYRFASLLLVLMLSA) form the signal peptide. Cys25 is lipidated: N-palmitoyl cysteine. Cys25 carries S-diacylglycerol cysteine lipidation.

It belongs to the BhsA/McbA family.

It localises to the cell membrane. Its function is as follows. Involved in protection of biofilms against oxidative stress. In Escherichia coli (strain K12), this protein is Lipoprotein BsmA (bsmA).